We begin with the raw amino-acid sequence, 110 residues long: Minor capsid protein VP2 (110 aa).

Belongs to the vesivirus VP2 protein family. Homooligomer. The portal-like structure consists in 12 copies of VP2. Interacts with capsid protein VP1.

The protein localises to the virion. It localises to the host cytoplasm. In terms of biological role, minor structural protein that forms a portal-like structure at a unique three-fold axis of symmetry, following binding to the host receptor. The channel formed by VP2 may allow the delivery of the viral genome through the host endosomal membrane. This Otariidae (fur seals &amp; sea lions) protein is Minor capsid protein VP2.